Consider the following 722-residue polypeptide: Host cell factor 2 (722 aa).

Kelch repeat units lie at residues 34-79 (LMII…GFVC), 83-130 (RILV…RLGH), 207-255 (KMYV…VIGN), and 257-303 (MYIF…VSDS). Fibronectin type-III domains follow at residues 359 to 460 (APSQ…VDSS), 514 to 604 (TPSN…TCTP), and 606 to 716 (FPGA…DQEK). The segment at 398–476 (ATSSDSSAAP…LAPNTSNNSS (79 aa)) is disordered. The span at 419–436 (QGSNSTLHNSVSDTVNST) shows a compositional bias: polar residues.

Binds KMT2A/MLL1. Component of the MLL1/MLL complex, at least composed of KMT2A/MLL1, ASH2L, RBBP5, DPY30, WDR5, MEN1, HCFC1 and HCFC2. Interacts with TASOR. In terms of tissue distribution, expressed in the spermatogonia, spermatocytes and ovary.

The protein localises to the cytoplasm. Its subcellular location is the nucleus. The sequence is that of Host cell factor 2 (Hcfc2) from Mus musculus (Mouse).